A 450-amino-acid chain; its full sequence is MSLLQFSGLFVVWLLCTLFIATLTWFEFRRMRFNFNVFFSLLFLLTFFFGFPLTSVLVFRFDVGVAPPEILLQALLSAGCFYAVYYVTYKTRLRKRVADVPRRPLFTMNRVETNLTWVILMGIALVSVGIFFMHNGFLLFRLNSYSQIFSSEVSGVALKRFFYFFIPAMLVVYFLRQDSKAWLFFLVSTVAFGLLTYMIVGGTRANIIIAFAIFLFIGIIRGWISLWMLAAAGVLGIVGMFWLALKRYGMNVSGDEAFYTFLYLTRDTFSPWENLALLLQNYDNIDFQGLAPIVRDFYVFIPSWLWPGRPSMVLNSANYFTWEVLNNHSGLAISPTLIGSLVVMGGALFIPLGAIVVGLIIKWFDWLYELGNRETNRYKAAILHSFCFGAIFNMIVLAREGLDSFVSRVVFFIVVFGACLMIAKLLYWLFESAGLIHKRTKSSLRTQVEG.

11 helical membrane passes run 6-26, 37-57, 63-83, 118-138, 155-175, 181-201, 207-227, 228-248, 341-361, 378-398, and 410-430; these read FSGL…LTWF, VFFS…TSVL, VGVA…CFYA, VILM…NGFL, GVAL…VYFL, AWLF…MIVG, IIIA…ISLW, MLAA…LKRY, LVVM…GLII, YKAA…IVLA, and VFFI…YWLF.

Belongs to the WzyE family. In terms of assembly, probably part of a complex composed of WzxE, WzyE and WzzE.

Its subcellular location is the cell inner membrane. It functions in the pathway bacterial outer membrane biogenesis; enterobacterial common antigen biosynthesis. Functionally, probably involved in the polymerization of enterobacterial common antigen (ECA) trisaccharide repeat units. The polypeptide is Probable ECA polymerase (Escherichia coli O7:K1 (strain IAI39 / ExPEC)).